Consider the following 292-residue polypeptide: Elongation factor Ts (292 aa).

Residues Thr-79–Val-82 form an involved in Mg(2+) ion dislocation from EF-Tu region.

Belongs to the EF-Ts family.

It is found in the cytoplasm. In terms of biological role, associates with the EF-Tu.GDP complex and induces the exchange of GDP to GTP. It remains bound to the aminoacyl-tRNA.EF-Tu.GTP complex up to the GTP hydrolysis stage on the ribosome. The chain is Elongation factor Ts from Staphylococcus haemolyticus (strain JCSC1435).